A 572-amino-acid polypeptide reads, in one-letter code: Proline--tRNA ligase (572 aa).

Belongs to the class-II aminoacyl-tRNA synthetase family. ProS type 1 subfamily. Homodimer.

The protein localises to the cytoplasm. It catalyses the reaction tRNA(Pro) + L-proline + ATP = L-prolyl-tRNA(Pro) + AMP + diphosphate. Catalyzes the attachment of proline to tRNA(Pro) in a two-step reaction: proline is first activated by ATP to form Pro-AMP and then transferred to the acceptor end of tRNA(Pro). As ProRS can inadvertently accommodate and process non-cognate amino acids such as alanine and cysteine, to avoid such errors it has two additional distinct editing activities against alanine. One activity is designated as 'pretransfer' editing and involves the tRNA(Pro)-independent hydrolysis of activated Ala-AMP. The other activity is designated 'posttransfer' editing and involves deacylation of mischarged Ala-tRNA(Pro). The misacylated Cys-tRNA(Pro) is not edited by ProRS. The protein is Proline--tRNA ligase of Enterobacter sp. (strain 638).